The sequence spans 418 residues: Serine hydroxymethyltransferase (418 aa).

(6S)-5,6,7,8-tetrahydrofolate is bound by residues Leu121 and 125–127 (GHL). Lys230 carries the post-translational modification N6-(pyridoxal phosphate)lysine. 355-357 (SPF) is a binding site for (6S)-5,6,7,8-tetrahydrofolate.

This sequence belongs to the SHMT family. In terms of assembly, homodimer. The cofactor is pyridoxal 5'-phosphate.

Its subcellular location is the cytoplasm. It catalyses the reaction (6R)-5,10-methylene-5,6,7,8-tetrahydrofolate + glycine + H2O = (6S)-5,6,7,8-tetrahydrofolate + L-serine. Its pathway is one-carbon metabolism; tetrahydrofolate interconversion. It functions in the pathway amino-acid biosynthesis; glycine biosynthesis; glycine from L-serine: step 1/1. Its function is as follows. Catalyzes the reversible interconversion of serine and glycine with tetrahydrofolate (THF) serving as the one-carbon carrier. This reaction serves as the major source of one-carbon groups required for the biosynthesis of purines, thymidylate, methionine, and other important biomolecules. Also exhibits THF-independent aldolase activity toward beta-hydroxyamino acids, producing glycine and aldehydes, via a retro-aldol mechanism. This chain is Serine hydroxymethyltransferase, found in Methylococcus capsulatus (strain ATCC 33009 / NCIMB 11132 / Bath).